Here is a 400-residue protein sequence, read N- to C-terminus: Argininosuccinate synthase (400 aa).

ATP is bound by residues 10–18 and A38; that span reads AYSGGVDTS. Y89 is a binding site for L-citrulline. G119 is an ATP binding site. 3 residues coordinate L-aspartate: T121, N125, and D126. N125 serves as a coordination point for L-citrulline. Positions 129, 177, 186, 262, and 274 each coordinate L-citrulline.

It belongs to the argininosuccinate synthase family. Type 1 subfamily. As to quaternary structure, homotetramer.

It is found in the cytoplasm. It catalyses the reaction L-citrulline + L-aspartate + ATP = 2-(N(omega)-L-arginino)succinate + AMP + diphosphate + H(+). The protein operates within amino-acid biosynthesis; L-arginine biosynthesis; L-arginine from L-ornithine and carbamoyl phosphate: step 2/3. The sequence is that of Argininosuccinate synthase from Synechococcus elongatus (strain ATCC 33912 / PCC 7942 / FACHB-805) (Anacystis nidulans R2).